The primary structure comprises 324 residues: Interactor of constitutive active ROPs 4 (324 aa).

4 disordered regions span residues 1 to 74 (MPKP…SGLE), 91 to 156 (LAKA…ASKE), 175 to 201 (SLSE…KAKE), and 289 to 324 (FVGS…KGQK). Residues 13-28 (QRQSPRLRTSLLSTSS) show a composition bias toward low complexity. Composition is skewed to basic and acidic residues over residues 29 to 50 (DPHH…DRRS), 95 to 106 (EAAKKRAQEELH), and 118 to 156 (PERD…ASKE). Residues 62–266 (SQKKLGSRIS…ADAAAAVLSG (205 aa)) are a coiled coil. Residues 313 to 324 (MFGDLWKKKGQK) show a composition bias toward basic and acidic residues.

The protein belongs to the ICR family. In terms of assembly, interacts with ARAC11 in vitro.

Functionally, acts as a scaffold, mediating interaction of ROPs with different proteins. The chain is Interactor of constitutive active ROPs 4 (ICR4) from Arabidopsis thaliana (Mouse-ear cress).